The sequence spans 291 residues: ATP synthase gamma chain (291 aa).

The protein belongs to the ATPase gamma chain family. As to quaternary structure, F-type ATPases have 2 components, CF(1) - the catalytic core - and CF(0) - the membrane proton channel. CF(1) has five subunits: alpha(3), beta(3), gamma(1), delta(1), epsilon(1). CF(0) has three main subunits: a, b and c.

It localises to the cell inner membrane. Functionally, produces ATP from ADP in the presence of a proton gradient across the membrane. The gamma chain is believed to be important in regulating ATPase activity and the flow of protons through the CF(0) complex. This is ATP synthase gamma chain from Pelagibacter ubique (strain HTCC1062).